Reading from the N-terminus, the 51-residue chain is Suberization-associated anionic peroxidase 1 (51 aa).

A heme-binding site is contributed by His-30. Residue Thr-31 coordinates Ca(2+).

It belongs to the peroxidase family. Classical plant (class III) peroxidase subfamily. Heme b is required as a cofactor. Ca(2+) serves as cofactor.

The protein resides in the secreted. The enzyme catalyses 2 a phenolic donor + H2O2 = 2 a phenolic radical donor + 2 H2O. Functionally, removal of H(2)O(2), oxidation of toxic reductants, biosynthesis and degradation of lignin, suberization, auxin catabolism, response to environmental stresses such as wounding, pathogen attack and oxidative stress. These functions might be dependent on each isozyme/isoform in each plant tissue. Its function is as follows. Suggested to catalyze the deposition of the aromatic residues of suberin on the cell wall and thus play a role in cell-suberization. This is Suberization-associated anionic peroxidase 1 from Capsicum annuum (Capsicum pepper).